A 152-amino-acid chain; its full sequence is MEFTTRTIPAQKHIALVAHDHCKQSLLDWVGTNKQQLTEHTLYATGTTGNLIQSNTGLPVKSMLSGPMGGDQQVGALISEGKIDLMIFFWDPLNAVPHDPDVKALLRLATVWNIPVATNRATADFLINSALFKEPVQIAIPDYQRYLQDRLK.

The MGS-like domain occupies 6 to 152 (RTIPAQKHIA…YQRYLQDRLK (147 aa)). Substrate-binding positions include His19, Lys23, 45–48 (TGTT), and 65–66 (SG). Asp71 acts as the Proton donor/acceptor in catalysis. His98 contributes to the substrate binding site.

This sequence belongs to the methylglyoxal synthase family.

The enzyme catalyses dihydroxyacetone phosphate = methylglyoxal + phosphate. Catalyzes the formation of methylglyoxal from dihydroxyacetone phosphate. The protein is Methylglyoxal synthase of Pectobacterium atrosepticum (strain SCRI 1043 / ATCC BAA-672) (Erwinia carotovora subsp. atroseptica).